A 334-amino-acid chain; its full sequence is Biotin synthase (334 aa).

Residues 55–280 enclose the Radical SAM core domain; it reads EEIEVEGIIS…HTMLRFAGGR (226 aa). The [4Fe-4S] cluster site is built by Cys-70, Cys-74, and Cys-77. Residues Cys-113, Cys-205, and Arg-275 each contribute to the [2Fe-2S] cluster site.

It belongs to the radical SAM superfamily. Biotin synthase family. Homodimer. Requires [4Fe-4S] cluster as cofactor. The cofactor is [2Fe-2S] cluster.

The enzyme catalyses (4R,5S)-dethiobiotin + (sulfur carrier)-SH + 2 reduced [2Fe-2S]-[ferredoxin] + 2 S-adenosyl-L-methionine = (sulfur carrier)-H + biotin + 2 5'-deoxyadenosine + 2 L-methionine + 2 oxidized [2Fe-2S]-[ferredoxin]. The protein operates within cofactor biosynthesis; biotin biosynthesis; biotin from 7,8-diaminononanoate: step 2/2. Functionally, catalyzes the conversion of dethiobiotin (DTB) to biotin by the insertion of a sulfur atom into dethiobiotin via a radical-based mechanism. In Corynebacterium glutamicum (strain R), this protein is Biotin synthase.